Reading from the N-terminus, the 281-residue chain is Bifunctional protein FolD (281 aa).

NADP(+) is bound by residues 164–166 (GRS), Ser-189, and Thr-230.

The protein belongs to the tetrahydrofolate dehydrogenase/cyclohydrolase family. As to quaternary structure, homodimer.

It carries out the reaction (6R)-5,10-methylene-5,6,7,8-tetrahydrofolate + NADP(+) = (6R)-5,10-methenyltetrahydrofolate + NADPH. The enzyme catalyses (6R)-5,10-methenyltetrahydrofolate + H2O = (6R)-10-formyltetrahydrofolate + H(+). It participates in one-carbon metabolism; tetrahydrofolate interconversion. Catalyzes the oxidation of 5,10-methylenetetrahydrofolate to 5,10-methenyltetrahydrofolate and then the hydrolysis of 5,10-methenyltetrahydrofolate to 10-formyltetrahydrofolate. The polypeptide is Bifunctional protein FolD (Dictyoglomus turgidum (strain DSM 6724 / Z-1310)).